We begin with the raw amino-acid sequence, 207 residues long: Peptidyl-tRNA hydrolase (207 aa).

TRNA is bound at residue Tyr15. His20 acts as the Proton acceptor in catalysis. TRNA contacts are provided by Phe66, Asn68, and Asn114. Residues 187–207 form a disordered region; that stretch reads HTTKPPRPKPARPATAESDKG. The segment covering 198-207 has biased composition (low complexity); that stretch reads RPATAESDKG.

The protein belongs to the PTH family. Monomer.

The protein resides in the cytoplasm. It catalyses the reaction an N-acyl-L-alpha-aminoacyl-tRNA + H2O = an N-acyl-L-amino acid + a tRNA + H(+). In terms of biological role, hydrolyzes ribosome-free peptidyl-tRNAs (with 1 or more amino acids incorporated), which drop off the ribosome during protein synthesis, or as a result of ribosome stalling. Catalyzes the release of premature peptidyl moieties from peptidyl-tRNA molecules trapped in stalled 50S ribosomal subunits, and thus maintains levels of free tRNAs and 50S ribosomes. The chain is Peptidyl-tRNA hydrolase from Delftia acidovorans (strain DSM 14801 / SPH-1).